The following is a 354-amino-acid chain: Uroporphyrinogen decarboxylase (354 aa).

Substrate-binding positions include 27-31 (RQAGR), Asp77, Tyr154, Ser209, and His327.

It belongs to the uroporphyrinogen decarboxylase family. Homodimer.

The protein resides in the cytoplasm. The catalysed reaction is uroporphyrinogen III + 4 H(+) = coproporphyrinogen III + 4 CO2. Its pathway is porphyrin-containing compound metabolism; protoporphyrin-IX biosynthesis; coproporphyrinogen-III from 5-aminolevulinate: step 4/4. Functionally, catalyzes the decarboxylation of four acetate groups of uroporphyrinogen-III to yield coproporphyrinogen-III. This chain is Uroporphyrinogen decarboxylase, found in Saccharophagus degradans (strain 2-40 / ATCC 43961 / DSM 17024).